A 300-amino-acid polypeptide reads, in one-letter code: MAWIVEQPKSQKELADRFRQLMKEEAILQIPGAHDAMAALVAKKAGFSALYLSGDAYTASRGLPDLGIVTSTEVADRAKDLVRATNLPVLVDIDTGFGGVLNVARTAQEMLEANVAAVQIEDQQLPKKCGHLNGKQLVSKEEMEQKIQAIKKVAPTLVIVARTDARANEGLNGAIERANVYIEAGADAIFPEALQSAEEFRLVAENVSAPLLANMTEFGKTPLMTAGGLQNAGFQMVIYPVTSLRVAAKAYERIFQLIKDEGTQEAGIEDMQTRKELYETISYDDFEALDKNIAKTVLGE.

A substrate-binding site is contributed by 53 to 55 (SGD). Mg(2+)-binding residues include aspartate 92 and aspartate 94. Residues 129–130 (CG), arginine 162, glutamate 192, 214–216 (NMT), arginine 245, and arginine 274 contribute to the substrate site.

The protein belongs to the isocitrate lyase/PEP mutase superfamily. Methylisocitrate lyase family. It depends on Mg(2+) as a cofactor.

It carries out the reaction 3-hydroxybutane-1,2,3-tricarboxylate = pyruvate + succinate. Involved in the methylcitric acid cycle. Catalyzes the cleavage of 2-methylisocitrate to yield pyruvate and succinate. This is 2-methylisocitrate lyase from Halalkalibacterium halodurans (strain ATCC BAA-125 / DSM 18197 / FERM 7344 / JCM 9153 / C-125) (Bacillus halodurans).